Reading from the N-terminus, the 198-residue chain is Transcriptional regulator GfcR (198 aa).

The protein belongs to the purine/pyrimidine phosphoribosyltransferase family. GfcR subfamily.

This is Transcriptional regulator GfcR from Methanospirillum hungatei JF-1 (strain ATCC 27890 / DSM 864 / NBRC 100397 / JF-1).